Here is a 424-residue protein sequence, read N- to C-terminus: Serine--tRNA ligase (424 aa).

230–232 (TAE) contacts L-serine. 261 to 263 (RSE) lines the ATP pocket. Glutamate 284 is an L-serine binding site. 348–351 (EISS) is a binding site for ATP. Serine 384 lines the L-serine pocket.

It belongs to the class-II aminoacyl-tRNA synthetase family. Type-1 seryl-tRNA synthetase subfamily. In terms of assembly, homodimer. The tRNA molecule binds across the dimer.

The protein localises to the cytoplasm. The enzyme catalyses tRNA(Ser) + L-serine + ATP = L-seryl-tRNA(Ser) + AMP + diphosphate + H(+). It catalyses the reaction tRNA(Sec) + L-serine + ATP = L-seryl-tRNA(Sec) + AMP + diphosphate + H(+). It functions in the pathway aminoacyl-tRNA biosynthesis; selenocysteinyl-tRNA(Sec) biosynthesis; L-seryl-tRNA(Sec) from L-serine and tRNA(Sec): step 1/1. Catalyzes the attachment of serine to tRNA(Ser). Is also able to aminoacylate tRNA(Sec) with serine, to form the misacylated tRNA L-seryl-tRNA(Sec), which will be further converted into selenocysteinyl-tRNA(Sec). This is Serine--tRNA ligase from Streptococcus pneumoniae serotype 4 (strain ATCC BAA-334 / TIGR4).